Here is a 346-residue protein sequence, read N- to C-terminus: Protein RecA (346 aa).

An ATP-binding site is contributed by 65 to 72; it reads GPESSGKT.

It belongs to the RecA family.

It is found in the cytoplasm. Functionally, can catalyze the hydrolysis of ATP in the presence of single-stranded DNA, the ATP-dependent uptake of single-stranded DNA by duplex DNA, and the ATP-dependent hybridization of homologous single-stranded DNAs. It interacts with LexA causing its activation and leading to its autocatalytic cleavage. This is Protein RecA from Enterococcus mundtii.